An 880-amino-acid chain; its full sequence is Valine--tRNA ligase (880 aa).

The 'HIGH' region signature appears at 48–58 (PNITGKLHLGH). The 'KMSKS' region signature appears at 527–531 (KMSKS). Lys530 contributes to the ATP binding site. Coiled-coil stretches lie at residues 717 to 741 (KEEL…AIRN) and 810 to 880 (LFDL…KSLK).

The protein belongs to the class-I aminoacyl-tRNA synthetase family. ValS type 1 subfamily. In terms of assembly, monomer.

It localises to the cytoplasm. It carries out the reaction tRNA(Val) + L-valine + ATP = L-valyl-tRNA(Val) + AMP + diphosphate. In terms of biological role, catalyzes the attachment of valine to tRNA(Val). As ValRS can inadvertently accommodate and process structurally similar amino acids such as threonine, to avoid such errors, it has a 'posttransfer' editing activity that hydrolyzes mischarged Thr-tRNA(Val) in a tRNA-dependent manner. This chain is Valine--tRNA ligase, found in Clostridium tetani (strain Massachusetts / E88).